The following is a 295-amino-acid chain: Uridine and thymidine phosphorylase (295 aa).

Residues arginine 81 and 125-128 (RLGT) contribute to the phosphate site. The substrate site is built by glutamine 203 and arginine 205.

Belongs to the PNP/UDP phosphorylase family. As to expression, expressed in hypodermis, pharynx, spermatheca and gonad.

The catalysed reaction is uridine + phosphate = alpha-D-ribose 1-phosphate + uracil. It catalyses the reaction thymidine + phosphate = 2-deoxy-alpha-D-ribose 1-phosphate + thymine. It carries out the reaction 2'-deoxyuridine + phosphate = 2-deoxy-alpha-D-ribose 1-phosphate + uracil. It participates in pyrimidine metabolism; UMP biosynthesis via salvage pathway; uracil from uridine (phosphorylase route): step 1/1. Its pathway is pyrimidine metabolism; dTMP biosynthesis via salvage pathway; dTMP from thymine: step 1/2. In terms of biological role, catalyzes the reversible phosphorylytic cleavage of uridine and thymidine to uracil and ribose-phosphate or thymine and deoxyribose-1-phosphate. The produced molecules are then utilized as carbon and energy sources or in the rescue of pyrimidine bases for nucleotide synthesis. Required for normal lifespan. This chain is Uridine and thymidine phosphorylase, found in Caenorhabditis elegans.